We begin with the raw amino-acid sequence, 194 residues long: Histone H1.0-A (194 aa).

Disordered stretches follow at residues 1–29 (MTEN…YSDM) and 96–194 (ADEV…GRKK). Residues 22–95 (DHPKYSDMIL…GASGSFRLAK (74 aa)) form the H15 domain. Basic residues-rich tracts occupy residues 102 to 164 (PAKK…KTVR) and 172 to 194 (KAKK…GRKK).

This sequence belongs to the histone H1/H5 family.

Its subcellular location is the nucleus. The protein localises to the chromosome. In terms of biological role, histones H1 are necessary for the condensation of nucleosome chains into higher-order structures. The histones H1.0 are found in cells that are in terminal stages of differentiation or that have low rates of cell division. This Xenopus laevis (African clawed frog) protein is Histone H1.0-A (h1-0-a).